A 617-amino-acid chain; its full sequence is Electron transfer flavoprotein-ubiquinone oxidoreductase, mitochondrial (617 aa).

The transit peptide at 1-33 directs the protein to the mitochondrion; the sequence is MLVPLAKLSCPAYQCFHALKIKKNYLPLCATRW. 71-85 serves as a coordination point for FAD; that stretch reads VVIVGAGPAGLSAAV. Lysine 96 carries the N6-acetyllysine modification. Residues 109-130 lie within the membrane without spanning it; sequence IGAHTLSGACLDPGAFKELFPD. N6-acetyllysine is present on residues lysine 132 and lysine 223. The a ubiquinone site is built by glycine 305 and glycine 306. Lysine 357 is subject to N6-acetyllysine. The stretch at 428 to 447 is an intramembrane region; the sequence is MGLHVTEYEDNLKNSWVWKE. At serine 551 the chain carries Phosphoserine. [4Fe-4S] cluster contacts are provided by cysteine 561, cysteine 586, cysteine 589, and cysteine 592. Positions 577–606 constitute a 4Fe-4S ferredoxin-type domain; the sequence is FRLQINAQNCVHCKTCDIKDPSQNINWVVP.

It belongs to the ETF-QO/FixC family. In terms of assembly, monomer. [4Fe-4S] cluster serves as cofactor. It depends on FAD as a cofactor.

It localises to the mitochondrion inner membrane. It catalyses the reaction a ubiquinone + reduced [electron-transfer flavoprotein] = a ubiquinol + oxidized [electron-transfer flavoprotein] + H(+). Its function is as follows. Accepts electrons from ETF and reduces ubiquinone. This Pongo abelii (Sumatran orangutan) protein is Electron transfer flavoprotein-ubiquinone oxidoreductase, mitochondrial (ETFDH).